A 318-amino-acid polypeptide reads, in one-letter code: Homoserine kinase (318 aa).

97–107 (PIGSGLGSSAC) lines the ATP pocket.

The protein belongs to the GHMP kinase family. Homoserine kinase subfamily.

It is found in the cytoplasm. It catalyses the reaction L-homoserine + ATP = O-phospho-L-homoserine + ADP + H(+). It functions in the pathway amino-acid biosynthesis; L-threonine biosynthesis; L-threonine from L-aspartate: step 4/5. Its function is as follows. Catalyzes the ATP-dependent phosphorylation of L-homoserine to L-homoserine phosphate. The sequence is that of Homoserine kinase from Vibrio cholerae serotype O1 (strain M66-2).